A 435-amino-acid chain; its full sequence is Proline--tRNA ligase (435 aa).

Belongs to the class-II aminoacyl-tRNA synthetase family. ProS type 2 subfamily. In terms of assembly, homodimer.

Its subcellular location is the cytoplasm. It catalyses the reaction tRNA(Pro) + L-proline + ATP = L-prolyl-tRNA(Pro) + AMP + diphosphate. In terms of biological role, catalyzes the attachment of proline to tRNA(Pro) in a two-step reaction: proline is first activated by ATP to form Pro-AMP and then transferred to the acceptor end of tRNA(Pro). This Sulfurimonas denitrificans (strain ATCC 33889 / DSM 1251) (Thiomicrospira denitrificans (strain ATCC 33889 / DSM 1251)) protein is Proline--tRNA ligase (proS).